Here is a 336-residue protein sequence, read N- to C-terminus: Ribosomal RNA large subunit methyltransferase F (336 aa).

It belongs to the methyltransferase superfamily. METTL16/RlmF family.

It localises to the cytoplasm. The enzyme catalyses adenosine(1618) in 23S rRNA + S-adenosyl-L-methionine = N(6)-methyladenosine(1618) in 23S rRNA + S-adenosyl-L-homocysteine + H(+). In terms of biological role, specifically methylates the adenine in position 1618 of 23S rRNA. The sequence is that of Ribosomal RNA large subunit methyltransferase F from Yersinia pestis bv. Antiqua (strain Nepal516).